We begin with the raw amino-acid sequence, 1381 residues long: Hepatocyte growth factor receptor (1381 aa).

An N-terminal signal peptide occupies residues 1-24; it reads MKAPAVLAPGILVLLFTLVQRSNG. Topologically, residues 25–934 are extracellular; that stretch reads ECKEALTKSE…VQPDQNFTGL (910 aa). The 489-residue stretch at 27–515 folds into the Sema domain; the sequence is KEALTKSEMN…TGKKITKIPL (489 aa). N-linked (GlcNAc...) asparagine glycosylation occurs at N45. Cystine bridges form between C95/C101, C98/C160, C133/C141, and C172/C175. The N-linked (GlcNAc...) asparagine glycan is linked to N106. N149 carries an N-linked (GlcNAc...) asparagine glycan. N202 carries an N-linked (GlcNAc...) asparagine glycan. Disulfide bonds link C298/C363 and C385/C397. N-linked (GlcNAc...) asparagine glycosylation occurs at N399. 4 cysteine pairs are disulfide-bonded: C520/C538, C526/C561, C529/C545, and C541/C551. IPT/TIG domains follow at residues 563 to 655, 657 to 739, and 742 to 836; these read PAIY…FSYV, PIIT…FSYL, and PIVY…LIYV. O-linked (Man) threonine glycosylation occurs at T582. N-linked (GlcNAc...) asparagine glycosylation is found at N607 and N635. O-linked (Man) threonine glycans are attached at residues T676 and T761. 3 N-linked (GlcNAc...) asparagine glycosylation sites follow: N785, N879, and N930. A helical transmembrane segment spans residues 935-955; it reads IAGVVSISIALLLLLAFFLWL. Residues 956–1381 are Cytoplasmic-facing; it reads KKRKQIKDLG…QDNADGEVDT (426 aa). S966 bears the Phosphoserine mark. A Phosphothreonine modification is found at T977. A phosphoserine mark is found at S990, S997, and S1000. Residue Y1003 is modified to Phosphotyrosine. One can recognise a Protein kinase domain in the interval 1078–1345; it reads VHFNEVIGRG…RISAIFSTFI (268 aa). ATP-binding positions include 1084–1092 and K1110; that span reads IGRGHFGCV. The active-site Proton acceptor is the D1204. The tract at residues 1212 to 1381 is interaction with RANBP9; the sequence is LDEKFTVKVA…QDNADGEVDT (170 aa). Residue Y1230 is modified to Phosphotyrosine. Phosphotyrosine; by autocatalysis is present on residues Y1234 and Y1235. A Phosphothreonine modification is found at T1289. The tract at residues 1320–1359 is interaction with MUC20; the sequence is WHPKAEMRPSFSELVSRISAIFSTFIGEHYVHVNATYVNV. Residues Y1349 and Y1356 each carry the phosphotyrosine; by autocatalysis modification. The residue at position 1365 (Y1365) is a Phosphotyrosine.

Belongs to the protein kinase superfamily. Tyr protein kinase family. Heterodimer made of an alpha chain (50 kDa) and a beta chain (145 kDa) which are disulfide linked. Binds PLXNB1. Interacts when phosphorylated with downstream effectors including STAT3, PIK3R1, SRC, PCLG1, GRB2 and GAB1. Interacts with SPSB1, SPSB2 and SPSB4. Interacts with INPP5D/SHIP1. When phosphorylated at Tyr-1356, interacts with INPPL1/SHIP2. Interacts with RANBP9 and RANBP10, as well as SPSB1, SPSB2, SPSB3 and SPSB4. SPSB1 binding occurs in the presence and in the absence of HGF, however HGF treatment has a positive effect on this interaction. Interacts with MUC20; prevents interaction with GRB2 and suppresses hepatocyte growth factor-induced cell proliferation. Interacts with GRB10. Interacts with PTPN1 and PTPN2. Interacts with HSP90AA1 and HSP90AB1; the interaction suppresses MET kinase activity. Interacts with tensin TNS3. Interacts (when phosphorylated) with tensin TNS4 (via SH2 domain); the interaction increases MET protein stability by inhibiting MET endocytosis and subsequent lysosomal degradation. Autophosphorylated in response to ligand binding on Tyr-1234 and Tyr-1235 in the kinase domain leading to further phosphorylation of Tyr-1349 and Tyr-1356 in the C-terminal multifunctional docking site. Dephosphorylated by PTPRJ at Tyr-1349 and Tyr-1365. Dephosphorylated by PTPN1 and PTPN2. Post-translationally, ubiquitinated. Ubiquitination by CBL regulates the receptor stability and activity through proteasomal degradation. In terms of processing, O-mannosylation of IPT/TIG domains by TMEM260 is required for protein maturation. O-mannosylated residues are composed of single mannose glycans that are not elongated or modified.

The protein localises to the membrane. It carries out the reaction L-tyrosyl-[protein] + ATP = O-phospho-L-tyrosyl-[protein] + ADP + H(+). Its activity is regulated as follows. In its inactive state, the C-terminal tail interacts with the catalytic domain and inhibits the kinase activity. Upon ligand binding, the C-terminal tail is displaced and becomes phosphorylated, thus increasing the kinase activity. Receptor tyrosine kinase that transduces signals from the extracellular matrix into the cytoplasm by binding to hepatocyte growth factor/HGF ligand. Regulates many physiological processes including proliferation, scattering, morphogenesis and survival. Ligand binding at the cell surface induces autophosphorylation of MET on its intracellular domain that provides docking sites for downstream signaling molecules. Following activation by ligand, interacts with the PI3-kinase subunit PIK3R1, PLCG1, SRC, GRB2, STAT3 or the adapter GAB1. Recruitment of these downstream effectors by MET leads to the activation of several signaling cascades including the RAS-ERK, PI3 kinase-AKT, or PLCgamma-PKC. The RAS-ERK activation is associated with the morphogenetic effects while PI3K/AKT coordinates prosurvival effects. During embryonic development, MET signaling plays a role in gastrulation, development and migration of muscles and neuronal precursors, angiogenesis and kidney formation. In adults, participates in wound healing as well as organ regeneration and tissue remodeling. Also promotes differentiation and proliferation of hematopoietic cells. This Plecturocebus moloch (Dusky titi monkey) protein is Hepatocyte growth factor receptor (MET).